A 1067-amino-acid chain; its full sequence is Probable isoleucine--tRNA ligase, cytoplasmic (1067 aa).

The short motif at 47 to 57 (PFATGLPHYGH) is the 'HIGH' region element. The 'KMSKS' region signature appears at 604–608 (KMSKR). K607 is an ATP binding site.

This sequence belongs to the class-I aminoacyl-tRNA synthetase family.

It is found in the cytoplasm. It catalyses the reaction tRNA(Ile) + L-isoleucine + ATP = L-isoleucyl-tRNA(Ile) + AMP + diphosphate. The protein is Probable isoleucine--tRNA ligase, cytoplasmic (ileS) of Dictyostelium discoideum (Social amoeba).